We begin with the raw amino-acid sequence, 579 residues long: Probable zinc metalloprotease EGY1, chloroplastic (579 aa).

2 disordered regions span residues 1 to 42 (MAAA…PASA) and 78 to 146 (GGGG…NEPP). The N-terminal 44 residues, 1–44 (MAAAAAALASSPMVHLTASRLRLPRPARSPAAATPSPSPASAAC), are a transit peptide targeting the chloroplast. Low complexity predominate over residues 16 to 42 (LTASRLRLPRPARSPAAATPSPSPASA). Gly residues predominate over residues 78–92 (GGGGGGGGGGGGTGG). Composition is skewed to low complexity over residues 104–115 (AAAAEAKVGGAV) and 125–137 (SGSF…SSSG). Transmembrane regions (helical) follow at residues 272–292 (YVIS…LGIA), 321–341 (LLPF…IQLF), 357–377 (LSIP…ITQF), 392–412 (MAGP…GLLL), 419–439 (ASDL…LGLV), 452–472 (ATVA…TTAF), 505–525 (LLGL…YVLI), and 547–567 (AALI…WDEL).

This sequence belongs to the peptidase M50B family.

It is found in the plastid. The protein localises to the chloroplast membrane. Functionally, probable membrane-associated metalloprotease that may be involved in chloroplast development. The sequence is that of Probable zinc metalloprotease EGY1, chloroplastic (EGY1) from Oryza sativa subsp. japonica (Rice).